The following is a 316-amino-acid chain: 4-hydroxy-3-methylbut-2-enyl diphosphate reductase (316 aa).

A [4Fe-4S] cluster-binding site is contributed by Cys-12. His-43 and His-81 together coordinate (2E)-4-hydroxy-3-methylbut-2-enyl diphosphate. 2 residues coordinate dimethylallyl diphosphate: His-43 and His-81. Isopentenyl diphosphate is bound by residues His-43 and His-81. Cys-103 provides a ligand contact to [4Fe-4S] cluster. His-131 lines the (2E)-4-hydroxy-3-methylbut-2-enyl diphosphate pocket. His-131 contributes to the dimethylallyl diphosphate binding site. His-131 is a binding site for isopentenyl diphosphate. Glu-133 functions as the Proton donor in the catalytic mechanism. A (2E)-4-hydroxy-3-methylbut-2-enyl diphosphate-binding site is contributed by Thr-170. Cys-198 contacts [4Fe-4S] cluster. Positions 226, 228, and 271 each coordinate (2E)-4-hydroxy-3-methylbut-2-enyl diphosphate. Dimethylallyl diphosphate is bound by residues Ser-226, Asn-228, and Ser-271. Ser-226, Asn-228, and Ser-271 together coordinate isopentenyl diphosphate.

It belongs to the IspH family. [4Fe-4S] cluster serves as cofactor.

The enzyme catalyses isopentenyl diphosphate + 2 oxidized [2Fe-2S]-[ferredoxin] + H2O = (2E)-4-hydroxy-3-methylbut-2-enyl diphosphate + 2 reduced [2Fe-2S]-[ferredoxin] + 2 H(+). It catalyses the reaction dimethylallyl diphosphate + 2 oxidized [2Fe-2S]-[ferredoxin] + H2O = (2E)-4-hydroxy-3-methylbut-2-enyl diphosphate + 2 reduced [2Fe-2S]-[ferredoxin] + 2 H(+). It functions in the pathway isoprenoid biosynthesis; dimethylallyl diphosphate biosynthesis; dimethylallyl diphosphate from (2E)-4-hydroxy-3-methylbutenyl diphosphate: step 1/1. Its pathway is isoprenoid biosynthesis; isopentenyl diphosphate biosynthesis via DXP pathway; isopentenyl diphosphate from 1-deoxy-D-xylulose 5-phosphate: step 6/6. In terms of biological role, catalyzes the conversion of 1-hydroxy-2-methyl-2-(E)-butenyl 4-diphosphate (HMBPP) into a mixture of isopentenyl diphosphate (IPP) and dimethylallyl diphosphate (DMAPP). Acts in the terminal step of the DOXP/MEP pathway for isoprenoid precursor biosynthesis. The protein is 4-hydroxy-3-methylbut-2-enyl diphosphate reductase of Bacillus cereus (strain AH820).